A 136-amino-acid chain; its full sequence is Small ribosomal subunit protein uS9 (136 aa).

A disordered region spans residues 97–136 (SPDNRKPLKTEGHLSRDPRAKERRKYGLKKARKAPQFSKR). Basic and acidic residues predominate over residues 98–116 (PDNRKPLKTEGHLSRDPRA). Over residues 117 to 136 (KERRKYGLKKARKAPQFSKR) the composition is skewed to basic residues.

It belongs to the universal ribosomal protein uS9 family.

The chain is Small ribosomal subunit protein uS9 from Prochlorococcus marinus (strain MIT 9301).